Here is a 375-residue protein sequence, read N- to C-terminus: 3-dehydroquinate synthase (375 aa).

Residues 82–87, 116–120, 140–141, Lys-153, and Lys-162 each bind NAD(+); these read SGETSK, GVVGD, and TT. Zn(2+) is bound by residues Glu-195, His-259, and His-276.

It belongs to the sugar phosphate cyclases superfamily. Dehydroquinate synthase family. It depends on NAD(+) as a cofactor. Co(2+) is required as a cofactor. The cofactor is Zn(2+).

It is found in the cytoplasm. It carries out the reaction 7-phospho-2-dehydro-3-deoxy-D-arabino-heptonate = 3-dehydroquinate + phosphate. Its pathway is metabolic intermediate biosynthesis; chorismate biosynthesis; chorismate from D-erythrose 4-phosphate and phosphoenolpyruvate: step 2/7. Functionally, catalyzes the conversion of 3-deoxy-D-arabino-heptulosonate 7-phosphate (DAHP) to dehydroquinate (DHQ). The protein is 3-dehydroquinate synthase of Rhodopirellula baltica (strain DSM 10527 / NCIMB 13988 / SH1).